The sequence spans 191 residues: Orotate phosphoribosyltransferase (191 aa).

114 to 122 (EDVVTTGKS) serves as a coordination point for 5-phospho-alpha-D-ribose 1-diphosphate. Residues threonine 118 and arginine 146 each coordinate orotate.

The protein belongs to the purine/pyrimidine phosphoribosyltransferase family. PyrE subfamily. As to quaternary structure, homodimer. Mg(2+) is required as a cofactor.

The catalysed reaction is orotidine 5'-phosphate + diphosphate = orotate + 5-phospho-alpha-D-ribose 1-diphosphate. Its pathway is pyrimidine metabolism; UMP biosynthesis via de novo pathway; UMP from orotate: step 1/2. Its function is as follows. Catalyzes the transfer of a ribosyl phosphate group from 5-phosphoribose 1-diphosphate to orotate, leading to the formation of orotidine monophosphate (OMP). The protein is Orotate phosphoribosyltransferase of Clostridium botulinum (strain Loch Maree / Type A3).